Reading from the N-terminus, the 359-residue chain is Archaemetzincin-2 (359 aa).

Residue His-254 participates in Zn(2+) binding. The Proton acceptor role is filled by Glu-255. Zn(2+) is bound by residues His-258, His-264, Cys-265, Cys-270, Cys-289, and Cys-292.

This sequence belongs to the peptidase M54 family. Requires Zn(2+) as cofactor. In terms of tissue distribution, predominantly expressed in testis.

Probable zinc metalloprotease. This Mus musculus (Mouse) protein is Archaemetzincin-2 (Amz2).